The primary structure comprises 427 residues: O-methyltransferase FrzF (427 aa).

Asp281 serves as a coordination point for S-adenosyl-L-methionine. His327 serves as the catalytic Proton acceptor.

Belongs to the class I-like SAM-binding methyltransferase superfamily. Cation-independent O-methyltransferase family. As to quaternary structure, homodimer.

The catalysed reaction is (1S,4S)-4-[(4-hydroxyphenyl)methyl]-2,5-diazaspiro[bicyclo[3.2.1]octane-6,1'-cyclohexan]-4'-one + S-adenosyl-L-methionine = (1S,4S)-4-[(4-methoxyphenyl)methyl]-2,5-diazaspiro[bicyclo[3.2.1]octane-6,1'-cyclohexan]-4'-one + S-adenosyl-L-homocysteine + H(+). The enzyme catalyses (1S,4S)-4-[(4-hydroxyphenyl)methyl]-2-methyl-2,5-diazaspiro[bicyclo[3.2.1]octane-6,1'-cyclohexan]-4'-one + S-adenosyl-L-methionine = (1S,4S)-4-[(4-methoxyphenyl)methyl]-2-methyl-2,5-diazaspiro[bicyclo[3.2.1]octane-6,1'-cyclohexan]-4'-one + S-adenosyl-L-homocysteine + H(+). Its pathway is secondary metabolite biosynthesis. Its function is as follows. O-methyltransferase; part of the gene cluster that mediates the biosynthesis of the alkaloid (-)-FR901483, a potent immunosuppressant that shows efficacy in animal models and a probable inhibitor of purine nucleotide biosynthesis by targeting phosphoribosylpyrophosphate amidotransferase (PPAT). Within the pathway, FrzF methylates the phenolic oxygen at position C4. The biosynthesis of (-)-FR901483 starts with the condensation of two L-tyrosines to yield (S,S)-dityrosyl-piperazine. This process occurs in 3 steps with the non-canonical nonribosomal peptide synthetase FrzA catalyzing the reduction of L-tyrosine into L-tyrosinal, the spontaneous condensation of 2 L-tyrosinal units, and the subsequent reduction by the NmrA-like family domain-containing oxidoreductase FrzB. The cytochrome P450 monooxygenase FrzC then performs coupling between N10 and C1' to morph the piperazine into a 1,4-diazabicyclo[3.2.1]octane spiro-fused to a 2,5-cyclohexadienone. The dienone portion is further reduced to cyclohexanone by the flavin-dependent reductase FrzD. The methyltranserases (MTs) FrzE and FrzF are then involved in the methylation at the C10' amine and the C4 phenolic oxygen, respectively. The order of the two MTs appear to be interchangeable. Cleavage of the C9-N10' bond by the dioxygenase FrzG then leads to formation of a conjugated iminium. In addition to the oxidation of C9, an additional dehydrogenation between C7 and C8 can occur to give a likely shunt product. The next biosynthetic step is the intramolecular aldol condensation catalyzed by the newly identified aldolase FrzH to yield an aza-tricyclic product with the formation of a C9-C3' bond. The short-chain dehydrogenase/reductase FrzI then produces dephospho-(-)-FR901483 that is phosphorylated at C4'-OH into (-)-FR901483 by the phosphotransferase FrzJ. The polypeptide is O-methyltransferase FrzF (Cladobotryum sp).